Here is a 343-residue protein sequence, read N- to C-terminus: Aspartate carbamoyltransferase catalytic subunit (343 aa).

Residues R91 and T92 each coordinate carbamoyl phosphate. Residue K119 coordinates L-aspartate. 3 residues coordinate carbamoyl phosphate: R141, H171, and Q174. Residues R204 and R259 each coordinate L-aspartate. G300 and P301 together coordinate carbamoyl phosphate.

It belongs to the aspartate/ornithine carbamoyltransferase superfamily. ATCase family. As to quaternary structure, heterododecamer (2C3:3R2) of six catalytic PyrB chains organized as two trimers (C3), and six regulatory PyrI chains organized as three dimers (R2).

It carries out the reaction carbamoyl phosphate + L-aspartate = N-carbamoyl-L-aspartate + phosphate + H(+). Its pathway is pyrimidine metabolism; UMP biosynthesis via de novo pathway; (S)-dihydroorotate from bicarbonate: step 2/3. Its function is as follows. Catalyzes the condensation of carbamoyl phosphate and aspartate to form carbamoyl aspartate and inorganic phosphate, the committed step in the de novo pyrimidine nucleotide biosynthesis pathway. The sequence is that of Aspartate carbamoyltransferase catalytic subunit from Burkholderia ambifaria (strain MC40-6).